The primary structure comprises 178 residues: MILLKLYLTLAAILCQSRGTTSLDLDDLMTTNPEIQNEIINKHNDLRRTVDPPAKNTLKMSWDNTIAESAKRAALRCNQNEHTPVSGRTIGGVVCGENYFMSSNLRTWSFGIQSWFDERNYFKFGFGPTRAGVMVGHYTQVVWYKSYKMGCAINLCPNEPLKYFLVCQYCPGGNVVGR.

The N-terminal stretch at 1–22 (MILLKLYLTLAAILCQSRGTTS) is a signal peptide. An SCP domain is found at 41 to 169 (NKHNDLRRTV…PLKYFLVCQY (129 aa)). Cystine bridges form between C77–C156, C95–C170, and C151–C167.

Belongs to the CRISP family. Contains 8 disulfide bonds. In terms of tissue distribution, expressed by the venom gland.

It is found in the secreted. In terms of biological role, blocks ryanodine receptors, and potassium channels. The polypeptide is Cysteine-rich venom protein VAR3 (Varanus acanthurus (Ridge-tailed monitor)).